The primary structure comprises 636 residues: Probable Xaa-Pro aminopeptidase P (636 aa).

Mn(2+) is bound by residues Asp-414, Asp-425, Glu-523, and Glu-537.

The protein belongs to the peptidase M24B family. Requires Mn(2+) as cofactor.

It catalyses the reaction Release of any N-terminal amino acid, including proline, that is linked to proline, even from a dipeptide or tripeptide.. Functionally, catalyzes the removal of a penultimate prolyl residue from the N-termini of peptides. The sequence is that of Probable Xaa-Pro aminopeptidase P (AMPP) from Ajellomyces capsulatus (strain H143) (Darling's disease fungus).